We begin with the raw amino-acid sequence, 324 residues long: 3'-5' exoribonuclease YhaM (324 aa).

The 117-residue stretch at 163 to 279 folds into the HD domain; sequence HVVSMLELAK…LHYIDNLDAK (117 aa).

This sequence belongs to the YhaM family.

In terms of biological role, shows a 3'-5' exoribonuclease activity. The sequence is that of 3'-5' exoribonuclease YhaM from Geobacillus sp. (strain WCH70).